The primary structure comprises 89 residues: Small ribosomal subunit protein uS19 (89 aa).

The protein belongs to the universal ribosomal protein uS19 family.

Protein S19 forms a complex with S13 that binds strongly to the 16S ribosomal RNA. In Stenotrophomonas maltophilia (strain K279a), this protein is Small ribosomal subunit protein uS19.